Consider the following 117-residue polypeptide: Large ribosomal subunit protein uL18 (117 aa).

Belongs to the universal ribosomal protein uL18 family. Part of the 50S ribosomal subunit; part of the 5S rRNA/L5/L18/L25 subcomplex. Contacts the 5S and 23S rRNAs.

In terms of biological role, this is one of the proteins that bind and probably mediate the attachment of the 5S RNA into the large ribosomal subunit, where it forms part of the central protuberance. The chain is Large ribosomal subunit protein uL18 from Haemophilus influenzae (strain 86-028NP).